Reading from the N-terminus, the 467-residue chain is Probable protein phosphatase 2C 55 (467 aa).

The PPM-type phosphatase domain occupies serine 222–valine 458. The Mn(2+) site is built by aspartate 252, glycine 253, aspartate 383, and aspartate 449.

Belongs to the PP2C family. Mg(2+) serves as cofactor. Mn(2+) is required as a cofactor.

It carries out the reaction O-phospho-L-seryl-[protein] + H2O = L-seryl-[protein] + phosphate. It catalyses the reaction O-phospho-L-threonyl-[protein] + H2O = L-threonyl-[protein] + phosphate. This Arabidopsis thaliana (Mouse-ear cress) protein is Probable protein phosphatase 2C 55.